The chain runs to 245 residues: Epoxyqueuosine reductase QueH (245 aa).

Residues cysteine 52, cysteine 53, cysteine 131, and cysteine 134 each contribute to the [4Fe-4S] cluster site. Cysteine 214 and cysteine 216 form a disulfide bridge.

Belongs to the QueH family.

It catalyses the reaction epoxyqueuosine(34) in tRNA + AH2 = queuosine(34) in tRNA + A + H2O. It functions in the pathway tRNA modification; tRNA-queuosine biosynthesis. Catalyzes the conversion of epoxyqueuosine (oQ) to queuosine (Q), which is a hypermodified base found in the wobble positions of tRNA(Asp), tRNA(Asn), tRNA(His) and tRNA(Tyr). This Haemophilus influenzae (strain ATCC 51907 / DSM 11121 / KW20 / Rd) protein is Epoxyqueuosine reductase QueH.